The following is a 730-amino-acid chain: Regulatory factor X 4 (730 aa).

The span at 30–41 (YSSHTSLGNISN) shows a compositional bias: polar residues. Residues 30 to 59 (YSSHTSLGNISNDETDEEKENRASKPHSTP) form a disordered region. Positions 61–136 (TLQWLGENYE…YHYYGIAVKE (76 aa)) form a DNA-binding region, RFX-type winged-helix. The disordered stretch occupies residues 500–532 (EPAISTPSPVPFSPAASSSSVEIPSATSPVSNQ). The segment covering 512-528 (SPAASSSSVEIPSATSP) has biased composition (low complexity).

Belongs to the RFX family.

Its subcellular location is the nucleus. Functionally, required for neural tube ciliogenesis during embryogenesis. The polypeptide is Regulatory factor X 4 (Xenopus laevis (African clawed frog)).